Here is a 500-residue protein sequence, read N- to C-terminus: NAD(P)H-quinone oxidoreductase chain 4, chloroplastic (500 aa).

Helical transmembrane passes span 4-24 (FPWL…IFFL), 37-57 (ICIC…HFQL), 87-107 (IGPI…AWPV), 113-130 (LFHF…GLFS), 134-154 (LLLF…LLSM), 167-187 (FILY…GMGL), 211-231 (ILFY…IPLH), 242-262 (HYST…YGLV), 272-292 (AHSI…IYAA), 305-325 (IAYS…SITD), 330-350 (GAIL…FLAG), 386-406 (LALP…GIIT), 416-436 (ILIT…LLSM), and 462-482 (LFVS…PDFV).

Belongs to the complex I subunit 4 family.

It is found in the plastid. The protein localises to the chloroplast thylakoid membrane. The enzyme catalyses a plastoquinone + NADH + (n+1) H(+)(in) = a plastoquinol + NAD(+) + n H(+)(out). It catalyses the reaction a plastoquinone + NADPH + (n+1) H(+)(in) = a plastoquinol + NADP(+) + n H(+)(out). In Acorus calamus var. americanus (American sweet flag), this protein is NAD(P)H-quinone oxidoreductase chain 4, chloroplastic.